A 253-amino-acid polypeptide reads, in one-letter code: Probable transcriptional regulatory protein AM1_1847 (253 aa).

Belongs to the TACO1 family.

The protein resides in the cytoplasm. The protein is Probable transcriptional regulatory protein AM1_1847 of Acaryochloris marina (strain MBIC 11017).